Reading from the N-terminus, the 138-residue chain is uncharacterized protein (138 aa).

35–42 (DFIGSFYN) serves as a coordination point for ATP.

This is an uncharacterized protein from Acanthamoeba polyphaga mimivirus (APMV).